Consider the following 76-residue polypeptide: EMBRYO SURROUNDING FACTOR 1-like protein 8 (76 aa).

The N-terminal stretch at 1–22 (MSSSQFFILCIILISSFPLHEC) is a signal peptide. Cystine bridges form between C38–C54, C43–C74, C52–C70, and C55–C63.

It belongs to the MEG family. In terms of tissue distribution, expressed in flowers.

The protein is EMBRYO SURROUNDING FACTOR 1-like protein 8 (ESFL8) of Arabidopsis thaliana (Mouse-ear cress).